Reading from the N-terminus, the 423-residue chain is tRNA(Ile2) 2-agmatinylcytidine synthetase TiaS (423 aa).

The OB DNA-binding region spans 273 to 347; the sequence is VIVYGRVVEE…GINIEKIKIL (75 aa).

It belongs to the TiaS family.

Its subcellular location is the cytoplasm. It catalyses the reaction cytidine(34) in tRNA(Ile2) + agmatine + ATP + H2O = 2-agmatinylcytidine(34) in tRNA(Ile2) + AMP + 2 phosphate + 2 H(+). Functionally, ATP-dependent agmatine transferase that catalyzes the formation of 2-agmatinylcytidine (agm2C) at the wobble position (C34) of tRNA(Ile2), converting the codon specificity from AUG to AUA. This chain is tRNA(Ile2) 2-agmatinylcytidine synthetase TiaS, found in Methanocaldococcus jannaschii (strain ATCC 43067 / DSM 2661 / JAL-1 / JCM 10045 / NBRC 100440) (Methanococcus jannaschii).